The following is an 889-amino-acid chain: Translation initiation factor IF-2 (889 aa).

Residues 158-296 (LKEKQEKRRQ…KYKSDELQSQ (139 aa)) form a disordered region. Low complexity predominate over residues 209-228 (AAATPATSTAPATTSTTAAT). The span at 238–270 (VKPEEKGEKKKKPTKQDAWKDEPVKRREPKARG) shows a compositional bias: basic and acidic residues. The tr-type G domain occupies 391–560 (PRAPVVTVMG…LLQAEVLELK (170 aa)). The segment at 400–407 (GHVDHGKT) is G1. Residue 400–407 (GHVDHGKT) participates in GTP binding. Positions 425-429 (GITQH) are G2. Residues 446–449 (DTPG) form a G3 region. GTP is bound by residues 446–450 (DTPGH) and 500–503 (NKMD). Positions 500–503 (NKMD) are G4. Residues 536–538 (SAK) are G5.

It belongs to the TRAFAC class translation factor GTPase superfamily. Classic translation factor GTPase family. IF-2 subfamily.

The protein resides in the cytoplasm. Its function is as follows. One of the essential components for the initiation of protein synthesis. Protects formylmethionyl-tRNA from spontaneous hydrolysis and promotes its binding to the 30S ribosomal subunits. Also involved in the hydrolysis of GTP during the formation of the 70S ribosomal complex. This chain is Translation initiation factor IF-2, found in Nitrosomonas europaea (strain ATCC 19718 / CIP 103999 / KCTC 2705 / NBRC 14298).